The primary structure comprises 135 residues: Large ribosomal subunit protein uL16c (135 aa).

This sequence belongs to the universal ribosomal protein uL16 family. Part of the 50S ribosomal subunit.

It localises to the plastid. The protein resides in the chloroplast. This Acorus calamus var. americanus (American sweet flag) protein is Large ribosomal subunit protein uL16c.